The chain runs to 196 residues: ECF RNA polymerase sigma factor SigM (196 aa).

The segment at L39–K105 is sigma-70 factor domain-2. Residues D63 to Q66 carry the Polymerase core binding motif. Residues A130 to L181 form a sigma-70 factor domain-4 region. The H-T-H motif DNA-binding region spans I156–A175.

The protein belongs to the sigma-70 factor family. ECF subfamily. In terms of assembly, interacts transiently with the RNA polymerase catalytic core formed by RpoA, RpoB, RpoC and RpoZ (2 alpha, 1 beta, 1 beta' and 1 omega subunit) to form the RNA polymerase holoenzyme that can initiate transcription. Interacts (via sigma-70 factor domain-4) with anti-sigma-M factor RsmA (AC L7N5D7).

Its function is as follows. Sigma factors are initiation factors that promote the attachment of RNA polymerase to specific initiation sites and are then released. Extracytoplasmic function (ECF) sigma factors are held in an inactive form by an anti-sigma factor (RsaM, AC L7N5D7) until released by regulated intramembrane proteolysis. This sigma factor is required for the synthesis of surface or secreted molecules. The sequence is that of ECF RNA polymerase sigma factor SigM (sigM) from Mycobacterium tuberculosis (strain ATCC 25618 / H37Rv).